A 432-amino-acid chain; its full sequence is Ornithine decarboxylase, chloroplastic (432 aa).

Lysine 95 bears the N6-(pyridoxal phosphate)lysine mark. Pyridoxal 5'-phosphate-binding positions include serine 227, glycine 265, and 298–301 (EPGR). 341–342 (YD) is a substrate binding site. Cysteine 377 acts as the Proton donor; shared with dimeric partner in catalysis. Aspartate 378 contributes to the substrate binding site. Residue tyrosine 406 participates in pyridoxal 5'-phosphate binding.

This sequence belongs to the Orn/Lys/Arg decarboxylase class-II family. As to quaternary structure, homodimer. Only the dimer is catalytically active, as the active sites are constructed of residues from both monomers. Pyridoxal 5'-phosphate serves as cofactor.

It localises to the plastid. The protein localises to the chloroplast. The catalysed reaction is L-lysine + H(+) = cadaverine + CO2. It carries out the reaction L-ornithine + H(+) = putrescine + CO2. The protein operates within alkaloid biosynthesis; nicotine biosynthesis. It participates in amine and polyamine biosynthesis; putrescine biosynthesis via L-ornithine pathway; putrescine from L-ornithine: step 1/1. Its activity is regulated as follows. Repressed by alpha-difluoromethylornithine (DFMO), 5,5'-dithiobis-(2-nitrobenzoic acid) (DTNB) and salicylaldehyde. Involved in the biosynthesis of pyridine alkaloid natural products, leading mainly to the production of anabasine, anatabine, nicotine and nornicotine, effective deterrents against herbivores with antiparasitic and pesticide properties (neurotoxins); nornicotine serves as the precursor in the synthesis of the carcinogen compound N'-nitrosonornicotine (NNN). Catalyzes the first and rate-limiting step of polyamine biosynthesis that converts ornithine into putrescine, which is the precursor for the polyamines, spermidine and spermine. Can also use, with a lower efficiency, L-lysine as substrate to produce cadaverine. Polyamines are essential for cell proliferation and are implicated in cellular processes, ranging from DNA replication to apoptosis. This chain is Ornithine decarboxylase, chloroplastic, found in Nicotiana glutinosa (Tobacco).